The primary structure comprises 222 residues: Ornithine decarboxylase antizyme 1 (222 aa).

This sequence belongs to the ODC antizyme family. In terms of assembly, interacts with ODC1 and thereby sterically blocks ODC homodimerization. Forms a ternary complex with PSMB4 and OAZ1 before PSMB4 is incorporated into the 20S proteasome. Interacts with AZIN2; this interaction disrupts the interaction between the antizyme and ODC1. Interacts with FAM171A1.

In terms of biological role, ornithine decarboxylase (ODC) antizyme protein that negatively regulates ODC activity and intracellular polyamine biosynthesis and uptake in response to increased intracellular polyamine levels. Binds to ODC monomers, inhibiting the assembly of the functional ODC homodimer, and targets the monomers for ubiquitin-independent proteolytic destruction by the 26S proteasome. Triggers ODC degradation by inducing the exposure of a cryptic proteasome-interacting surface of ODC. Stabilizes AZIN2 by interfering with its ubiquitination. Also inhibits cellular uptake of polyamines by inactivating the polyamine uptake transporter. SMAD1/OAZ1/PSMB4 complex mediates the degradation of the CREBBP/EP300 repressor SNIP1. Involved in the translocation of AZIN2 from ER-Golgi intermediate compartment (ERGIC) to the cytosol. The polypeptide is Ornithine decarboxylase antizyme 1 (OAZ1) (Mesocricetus auratus (Golden hamster)).